Here is a 496-residue protein sequence, read N- to C-terminus: Cytochrome P450 71D180 (496 aa).

Residues 1 to 21 (MDISISWVVIIVFVLSYLILM) traverse the membrane as a helical; Signal-anchor for type II membrane protein segment. Cys435 contacts heme. Positions 471-496 (MSETPGLSGPRKNPLIMIPTIHNPTS) are disordered.

The protein belongs to the cytochrome P450 family. Heme is required as a cofactor.

It is found in the membrane. It carries out the reaction gamma-terpinene + 2 reduced [NADPH--hemoprotein reductase] + 2 O2 = carvacrol + 2 oxidized [NADPH--hemoprotein reductase] + 3 H2O + 2 H(+). It catalyses the reaction (4S)-limonene + reduced [NADPH--hemoprotein reductase] + O2 = (1S,5R)-carveol + oxidized [NADPH--hemoprotein reductase] + H2O + H(+). The enzyme catalyses (4R)-limonene + reduced [NADPH--hemoprotein reductase] + O2 = (1R,5S)-carveol + oxidized [NADPH--hemoprotein reductase] + H2O + H(+). Its pathway is secondary metabolite biosynthesis; terpenoid biosynthesis. Involved in the biosynthesis of phenolic monoterpenes natural products thymol and carvacrol which have a broad range of biological activities acting as antimicrobial compounds, insecticides, antioxidants and pharmaceutical agents. Catalyzes the C2-hydroxylation of gamma-terpinene to produce carvacrol. Mediates also the C6-hydroxylation of (4S)-limonene and (4R)-limonene to form carveol. The chain is Cytochrome P450 71D180 from Origanum majorana (Sweet marjoram).